The following is a 399-amino-acid chain: Syndecan (399 aa).

The first 28 residues, 1–28 (MKPKQKISVEPLLLVAILIGVLVAATHA), serve as a signal peptide directing secretion. Positions 28–319 (AQDQKSVKPS…TKGIDHRPNG (292 aa)) are disordered. Residues 29–340 (QDQKSVKPSA…TSSFFSQPGI (312 aa)) are Extracellular-facing. Low complexity predominate over residues 36-46 (PSAAAPSAAAS). The O-linked (Xyl...) (glycosaminoglycan) serine glycan is linked to S62. Residues 67–77 (GIHEDLEKDPD) show a composition bias toward basic and acidic residues. S79, S81, and S110 each carry an O-linked (Xyl...) (glycosaminoglycan) serine glycan. The span at 99 to 116 (SHNTRISQSSNSGINTAH) shows a compositional bias: polar residues. Residues 117–172 (TPTQTSSTIPTTSTSTPMPTTTPTATTPASTTTAAATQISSFANSSSTTTTTLAPT) are compositionally biased toward low complexity. N-linked (GlcNAc...) asparagine glycosylation is present at N160. Residues 191-214 (TESSGDGIDADAEDDDEDDGDDKD) show a composition bias toward acidic residues. A glycan (O-linked (Xyl...) (glycosaminoglycan) serine) is linked at S194. The segment covering 215 to 226 (YDYNKELDKEID) has biased composition (basic and acidic residues). The span at 253–270 (DEIDVDGGDEDDNGDSDI) shows a compositional bias: acidic residues. A compositionally biased stretch (polar residues) spans 299-309 (PNTNVNSQPSD). The chain crosses the membrane as a helical span at residues 341-365 (LAAVIGGAVVGLLCAILVVMFIVYR). The Cytoplasmic portion of the chain corresponds to 366 to 399 (MRKKDEGSYALDEPKRSPANNSYAKNANNREFYA). The disordered stretch occupies residues 373-399 (SYALDEPKRSPANNSYAKNANNREFYA). The span at 383-399 (PANNSYAKNANNREFYA) shows a compositional bias: polar residues.

The protein belongs to the syndecan proteoglycan family. As to expression, in 13-16 hours embryos, expressed in lymph glands, peripheral and central nervous system and basal surfaces of gut epithelia. Sdc and robo are coexpressed in domains adjacent to slit; in tracheal pits and midline glia cells.

It localises to the membrane. In terms of biological role, cell surface proteoglycan that bears heparan sulfate. Required for axonal and myotube guidance, is a necessary component of slit/robo signaling and is required in the slit target cells. The chain is Syndecan (Sdc) from Drosophila melanogaster (Fruit fly).